We begin with the raw amino-acid sequence, 476 residues long: Rifampicin monooxygenase (476 aa).

FAD contacts are provided by T12, E31, K32, Q98, L122, and T156. Residues R196 and R213 each coordinate rifampicin. FAD is bound by residues D277, L290, and N291.

The protein belongs to the rifampicin monooxygenase family. FAD serves as cofactor.

The catalysed reaction is rifampicin + NADPH + O2 = rifampicin para-naphthoquinone carboxamide + NADP(+) + H2O + H(+). It carries out the reaction rifampicin + NADH + O2 = rifampicin para-naphthoquinone carboxamide + NAD(+) + H2O + H(+). The enzyme catalyses rifamycin SV + NADPH + O2 = rifamycin SV para-naphthoquinone carboxamide + NADP(+) + H2O. It catalyses the reaction rifamycin SV + NADH + O2 = rifamycin SV para-naphthoquinone carboxamide + NAD(+) + H2O. In terms of biological role, monooxygenase that can modify rifampicin, thereby inactivating its antibiotic activity. Inactivates a broad range of rifamycin antibiotics. This is Rifampicin monooxygenase from Streptomyces venezuelae (strain ATCC 10712 / CBS 650.69 / DSM 40230 / JCM 4526 / NBRC 13096 / PD 04745).